We begin with the raw amino-acid sequence, 84 residues long: Acyl carrier protein (84 aa).

In terms of domain architecture, Carrier spans 6-81 (EEILTGLAEI…DAVDYIANAT (76 aa)). Residue Ser41 is modified to O-(pantetheine 4'-phosphoryl)serine.

The protein belongs to the acyl carrier protein (ACP) family. In terms of processing, 4'-phosphopantetheine is transferred from CoA to a specific serine of apo-ACP by AcpS. This modification is essential for activity because fatty acids are bound in thioester linkage to the sulfhydryl of the prosthetic group.

The protein resides in the cytoplasm. It participates in lipid metabolism; fatty acid biosynthesis. Its function is as follows. Carrier of the growing fatty acid chain in fatty acid biosynthesis. The chain is Acyl carrier protein from Acidothermus cellulolyticus (strain ATCC 43068 / DSM 8971 / 11B).